The sequence spans 1654 residues: MSKARSRNSLLSSSNRAQFGNSTQDELLKLKFSMEKPDIGLYPLNDLDNGVDLNGDNSRSQHTAGSGVLSGNEVTYPDYKPWKDHTALPNDKKEQEHQKLNNAAYLNKGYFETPVVANEYYSARNLIQATVFSSTENCNEVLKELSQHLANAYKTRNEIINKIKYESNNFKIPPRVTLTASKKESWLKDLANPDLALSKIAEKIPHGIRNKILIDAVCNKSVPINRALWFTKCVLFGELVALRRKHQSRMSLNSPIPQSLDINTPEKFEIHWLQEWTQQVADYIYKFSKESSNFNTIERKQYYMNKMTYLLTYIQALYVEFLLDKSFFLALIIKFLKEGLPLDPLHVSELLSSTRSETDDLIQESWIEDLDLNYGQRLFALTLIKIFWNDILKFDYICKELSETLLLNYLFISKINAYSFKQSHVQNHKASIPEPLRQKILDMIGDTITYLFKFNTNVFIIPNYWMLINGVLFTILLNKNVTKTEGELDEISKQFDLIKYRNESLILNMRNVQPSITDRATPNSAGRRGSSIWNQSFVSAAESTATKIDIFDNEATFINRSSDDILKIISQLDSLKLNDELANFLKPVTSSSALTSTAIKGCPKWRTNLKVVLYWCITRHRNSRESSEDILIICNFLKRKVLQTLGPTRSSSQLKAEFESEILDIIYNIADTNSSKVVNYDLYVLINELYQLKVLTIASYLRKLIASGIFYVAPDAEDNILNDNSNSLVKTHLSILQNLPVINNRQCDSILKKWTSTGFNFKEKFEMGQEILKRELIDRIVNNTFDDQFESHIVYVKDLNVGLKFLLVNWVTNELKSAITESPKLIHINPLIISNLFNFYSICDNLTVFFKVLVKFILKNEGGMIIFYLESLYLIARLIIKHFKLVKFIAGNSYGSNSTAYELFKLIIQNYKDCKTREFDYFKFDQVWNFIDTAVESNYSSDKNTDSRSSGKRSGIFNKEQFDSPMKINTSENVIAKMEDRYTSADFRNDLDLLLESTFQPMDSNEVSEVVATLKLEFEENEMKSHRNVVPKVLDLLKSNLTEESEGLAAKLLINSQYLIKSDDVNAFDKLVQDYILELVKSDMEILLVAKFLKKLIVHEIIRINDLFAFFEPIAEDPAFRVKLKALMFDLVIGLSDEEREYLSNSQILQLEIMRQWYRERSTSSFLVLILKGIKTIEGSIFDCPLMEKYGSSIFRILNALIVANTKLLSDELISKISTEDSIRLLSTLNNENFTPINSLQDLERIASEVDEFNLPIFQLLLRVLTIKELSPLQENEIQERLKVLLESFLENLSFGFTPMNSYFGELFIYLPWEYVVSILGMLEDKFLCSTTFNFDQWDNDKSVLSLTNSVGNTNLLPVFNDYFKKFSSSSSNVVESSSSFFQALSKFLSKLLLIVNSDNCLEDTFEDTSSAISIFLRILIIHKLTLTRLIVTQDGEQFQFIKNLILLINSKFIAEGNEKLRILLYDLLLLMKSSVTEEVSKQTENELSEGTSPGFGMTAQSPPPVEDASKITEPLSSARPSSEAASFQTNPISTYDQVSSLFNLPEPTETNPFKDYITEDRVECALTLSEDELQSGGDIHGFNESNLVLISSSNDSTFSGAFALITNPHQRPKGQPFKLRSFEILEGTSTTSLNDGCINLQLFDSYTTKENPP.

2 disordered regions span residues 52 to 72 (DLNG…LSGN) and 1481 to 1530 (SKQT…SFQT). Positions 1515–1530 (PLSSARPSSEAASFQT) are enriched in polar residues.

This sequence belongs to the Mediator complex subunit 12 family. In terms of assembly, component of the SRB8-11 complex, which itself associates with the Mediator complex.

The protein localises to the nucleus. Its function is as follows. Component of the SRB8-11 complex. The SRB8-11 complex is a regulatory module of the Mediator complex which is itself involved in regulation of basal and activated RNA polymerase II-dependent transcription. The SRB8-11 complex may be involved in the transcriptional repression of a subset of genes regulated by Mediator. It may inhibit the association of the Mediator complex with RNA polymerase II to form the holoenzyme complex. The polypeptide is Mediator of RNA polymerase II transcription subunit 12 (SRB8) (Scheffersomyces stipitis (strain ATCC 58785 / CBS 6054 / NBRC 10063 / NRRL Y-11545) (Yeast)).